Reading from the N-terminus, the 206-residue chain is Ras-related protein RABG3c (206 aa).

15–22 (GDSGVGKT) contributes to the GTP binding site. The Effector region motif lies at 37-45 (YKATIGADF). GTP contacts are provided by residues 63 to 67 (DTAGQ), 125 to 128 (NKTD), and 158 to 159 (SA). S-geranylgeranyl cysteine attachment occurs at residues Cys-204 and Cys-206. Cysteine methyl ester is present on Cys-206.

Belongs to the small GTPase superfamily. Rab family.

It localises to the cell membrane. Intracellular vesicle trafficking and protein transport. This Arabidopsis thaliana (Mouse-ear cress) protein is Ras-related protein RABG3c (RABG3C).